A 318-amino-acid chain; its full sequence is Molybdenum cofactor insertion chaperone PaoD (318 aa).

Homodimer in solution. Interacts with MocA.

Its function is as follows. Chaperone required for the production of an active PaoABC aldehyde oxidoreductase. Stabilizes the PaoC subunit and is required for the insertion of the molybdenum cofactor into this subunit. Binds molybdenum cofactor. Binds the molybdopterin cytosine dinucleotide (MCD) form of the cofactor after its formation by the molybdenum cofactor cytidylyltransferase MocA. This is Molybdenum cofactor insertion chaperone PaoD from Escherichia coli (strain K12).